A 358-amino-acid polypeptide reads, in one-letter code: 3-dehydroquinate synthase (358 aa).

NAD(+) contacts are provided by residues 70-75 (DGEKFK), 104-108 (GVVGD), 128-129 (TT), Lys-141, Lys-150, and 168-171 (CLQT). Residues Glu-183, His-246, and His-263 each coordinate Zn(2+).

The protein belongs to the sugar phosphate cyclases superfamily. Dehydroquinate synthase family. Requires Co(2+) as cofactor. Zn(2+) is required as a cofactor. It depends on NAD(+) as a cofactor.

Its subcellular location is the cytoplasm. It carries out the reaction 7-phospho-2-dehydro-3-deoxy-D-arabino-heptonate = 3-dehydroquinate + phosphate. It functions in the pathway metabolic intermediate biosynthesis; chorismate biosynthesis; chorismate from D-erythrose 4-phosphate and phosphoenolpyruvate: step 2/7. Functionally, catalyzes the conversion of 3-deoxy-D-arabino-heptulosonate 7-phosphate (DAHP) to dehydroquinate (DHQ). In Shewanella frigidimarina (strain NCIMB 400), this protein is 3-dehydroquinate synthase.